Here is a 110-residue protein sequence, read N- to C-terminus: Large ribosomal subunit protein uL22 (110 aa).

Belongs to the universal ribosomal protein uL22 family. As to quaternary structure, part of the 50S ribosomal subunit.

Its function is as follows. This protein binds specifically to 23S rRNA; its binding is stimulated by other ribosomal proteins, e.g. L4, L17, and L20. It is important during the early stages of 50S assembly. It makes multiple contacts with different domains of the 23S rRNA in the assembled 50S subunit and ribosome. In terms of biological role, the globular domain of the protein is located near the polypeptide exit tunnel on the outside of the subunit, while an extended beta-hairpin is found that lines the wall of the exit tunnel in the center of the 70S ribosome. The polypeptide is Large ribosomal subunit protein uL22 (Nitrosococcus oceani (strain ATCC 19707 / BCRC 17464 / JCM 30415 / NCIMB 11848 / C-107)).